Here is a 242-residue protein sequence, read N- to C-terminus: Uridylate kinase (242 aa).

ATP contacts are provided by residues 15–18 (KISG), Gly-58, and Arg-62. UMP-binding positions include Asp-77 and 139 to 146 (TGNPFFTT). Residues Thr-166, Tyr-172, and Asp-175 each coordinate ATP.

It belongs to the UMP kinase family. Homohexamer.

Its subcellular location is the cytoplasm. The enzyme catalyses UMP + ATP = UDP + ADP. Its pathway is pyrimidine metabolism; CTP biosynthesis via de novo pathway; UDP from UMP (UMPK route): step 1/1. With respect to regulation, inhibited by UTP. Functionally, catalyzes the reversible phosphorylation of UMP to UDP. The protein is Uridylate kinase of Buchnera aphidicola subsp. Acyrthosiphon pisum (strain APS) (Acyrthosiphon pisum symbiotic bacterium).